A 476-amino-acid polypeptide reads, in one-letter code: Cytosolic iron-sulfur assembly component 3 (476 aa).

Ala-2 bears the N-acetylalanine mark. 8 residues coordinate [4Fe-4S] cluster: Cys-24, Cys-71, Cys-74, Cys-77, Cys-190, Cys-246, Cys-395, and Cys-399.

It belongs to the NARF family. External component of the CIA complex. In the CIA complex, interacts directly with CIAO1 and MMS19.

In terms of biological role, component of the cytosolic iron-sulfur protein assembly (CIA) complex, a multiprotein complex that mediates the incorporation of iron-sulfur cluster into extramitochondrial Fe/S proteins. Seems to negatively regulate the level of HIF1A expression, although this effect could be indirect. This chain is Cytosolic iron-sulfur assembly component 3, found in Bos taurus (Bovine).